A 450-amino-acid chain; its full sequence is Carbamoyl phosphate synthase arginine-specific small chain (450 aa).

Residues 1-29 constitute a mitochondrion transit peptide; the sequence is MFAARLFKAMPARASAFPSVNASIQSRFM. The 188-residue stretch at 220 to 407 folds into the Glutamine amidotransferase type-1 domain; the sequence is HVAVIDCGVK…LDSVRKYKAS (188 aa). The active-site Nucleophile is the Cys-296. Catalysis depends on residues His-380 and Glu-382.

The protein belongs to the CarA family. As to quaternary structure, heterodimer composed of 2 chains; the small (or glutamine) chain promotes the hydrolysis of glutamine to ammonia, which is used by the large (or ammonia) chain to synthesize carbamoyl phosphate.

It is found in the mitochondrion matrix. It catalyses the reaction hydrogencarbonate + L-glutamine + 2 ATP + H2O = carbamoyl phosphate + L-glutamate + 2 ADP + phosphate + 2 H(+). The catalysed reaction is L-glutamine + H2O = L-glutamate + NH4(+). Its pathway is amino-acid biosynthesis; L-arginine biosynthesis; carbamoyl phosphate from bicarbonate: step 1/1. In terms of biological role, small subunit of the arginine-specific carbamoyl phosphate synthase (CPSase). CPSase catalyzes the formation of carbamoyl phosphate from the ammonia moiety of glutamine, carbonate, and phosphate donated by ATP, the first step of the arginine biosynthetic pathway. The small subunit (glutamine amidotransferase) binds and cleaves glutamine to supply the large subunit with the substrate ammonia. The sequence is that of Carbamoyl phosphate synthase arginine-specific small chain (cpa1) from Aspergillus oryzae (strain ATCC 42149 / RIB 40) (Yellow koji mold).